The primary structure comprises 484 residues: Ornithine decarboxylase (484 aa).

The residue at position 114 (K114) is an N6-(pyridoxal phosphate)lysine. Pyridoxal 5'-phosphate contacts are provided by residues S245, G282, and 315-318; that span reads EPGR. Residue 381-382 participates in substrate binding; sequence FD. Catalysis depends on C422, which acts as the Proton donor; shared with dimeric partner. D423 serves as a coordination point for substrate. Residue Y452 coordinates pyridoxal 5'-phosphate.

Belongs to the Orn/Lys/Arg decarboxylase class-II family. Homodimer. Only the dimer is catalytically active, as the active sites are constructed of residues from both monomers. Requires pyridoxal 5'-phosphate as cofactor.

It localises to the cytoplasm. The catalysed reaction is L-ornithine + H(+) = putrescine + CO2. It functions in the pathway amine and polyamine biosynthesis; putrescine biosynthesis via L-ornithine pathway; putrescine from L-ornithine: step 1/1. With respect to regulation, inhibited by antizyme (AZ) OAZ1 in response to polyamine levels. AZ inhibits the assembly of the functional homodimer by binding to ODC monomers and targeting them for ubiquitin-independent proteolytic destruction by the 26S proteasome. Its function is as follows. Catalyzes the first and rate-limiting step of polyamine biosynthesis that converts ornithine into putrescine, which is the precursor for the polyamines, spermidine and spermine. Polyamines are essential for cell proliferation and are implicated in cellular processes, ranging from DNA replication to apoptosis. The sequence is that of Ornithine decarboxylase (spe-1) from Neurospora crassa (strain ATCC 24698 / 74-OR23-1A / CBS 708.71 / DSM 1257 / FGSC 987).